Consider the following 414-residue polypeptide: Putative truncated GMC-type inactive oxidoreductase R832 (414 aa).

The N-terminal stretch at 1 to 20 (MNPTKLFLVFVAFAFAIINA) is a signal peptide. FAD is bound at residue 38–67 (DYIIVGSGPGGSRAVQQCIAKGHKCTLVER).

Belongs to the GMC oxidoreductase family. FAD is required as a cofactor.

The protein is Putative truncated GMC-type inactive oxidoreductase R832 of Acanthamoeba polyphaga (Amoeba).